Here is a 115-residue protein sequence, read N- to C-terminus: ER exit protein (115 aa).

It belongs to the STEEP1 family.

May stimulate membrane curvature formation and subsequent endoplasmic reticulum exit site (ERES) establishment. This Schizosaccharomyces pombe (strain 972 / ATCC 24843) (Fission yeast) protein is ER exit protein.